The chain runs to 135 residues: P2Y purinoceptor 4 (135 aa).

Residues 1-25 (VHFSSSVMVLLFGLPFLVTLVCYGL) traverse the membrane as a helical segment. Over 26-49 (MALRLCRPLPGAGQSSSRLRSLRT) the chain is Cytoplasmic. A helical transmembrane segment spans residues 50–72 (IAVVMTVFAVCLVPFHITRTIYY). The Extracellular segment spans residues 73 to 90 (LARLLKADCQILNIVNVV). A helical membrane pass occupies residues 91–112 (YKVTRPLASANSCLDPLLYLFT). Topologically, residues 113–135 (GDKYRHQLQRLCRVSAPQRRITA) are cytoplasmic.

It belongs to the G-protein coupled receptor 1 family. Expressed in brain, heart, stria vascularis and vestibular labyrinth.

Its subcellular location is the cell membrane. Functionally, receptor for ATP and UTP coupled to G-proteins that activate a phosphatidylinositol-calcium second messenger system. Not activated by UDP. The polypeptide is P2Y purinoceptor 4 (P2RY4) (Meriones unguiculatus (Mongolian jird)).